The primary structure comprises 517 residues: MQLNPAEISELIKSRIEGLGASSDIRNQGTVVSVTDGIVRVHGLSEVMAGEMLEFPATKDGQPTFGLALNLERDSVGAVILGEYEHISEGDTVKCTGRILEVPVGPELIGRVVNALGQPIDGKGPINAKMTDVIEKVAPGVIARKSVDQPVQTGLKSIDSMVPVGRGQRELIIGDRQTGKTAVAIDAIINQKGQNMTCVYVAIGQKASSIKNVVRSLEAAGAMSYTIVVAASASESAAMQYVSAYSGCTMGEYFRDRGEDALIIYDDLSKQAVAYRQVSLLLRRPPGREAYPGDVFYLHSRLLERAARVNADYVEKFTNGAVKGKTGSLTALPIIETQAGDVSAFVPTNVISITDGQIFLETNLFNAGIRPAINAGISVSRVGGAAQTKLVKGLSGGIRTDLAQYRELAAFAQFASDLDDATRKQLDRGARVTELLKQQQYQPLPISLMAATLYSVNKGFLDDVDVKKVLAFESGLHQFLKTSYAALLKKLEDSKALDKDSEAELAAAIGAFKKSFA.

Residue 174-181 (GDRQTGKT) participates in ATP binding.

Belongs to the ATPase alpha/beta chains family. F-type ATPases have 2 components, CF(1) - the catalytic core - and CF(0) - the membrane proton channel. CF(1) has five subunits: alpha(3), beta(3), gamma(1), delta(1), epsilon(1). CF(0) has four main subunits: a(1), b(1), b'(1) and c(9-12).

It is found in the cell inner membrane. The catalysed reaction is ATP + H2O + 4 H(+)(in) = ADP + phosphate + 5 H(+)(out). Functionally, produces ATP from ADP in the presence of a proton gradient across the membrane. The alpha chain is a regulatory subunit. The protein is ATP synthase subunit alpha of Methylibium petroleiphilum (strain ATCC BAA-1232 / LMG 22953 / PM1).